The primary structure comprises 96 residues: Co-chaperonin GroES 2 (96 aa).

Belongs to the GroES chaperonin family. In terms of assembly, heptamer of 7 subunits arranged in a ring. Interacts with the chaperonin GroEL.

The protein localises to the cytoplasm. In terms of biological role, together with the chaperonin GroEL, plays an essential role in assisting protein folding. The GroEL-GroES system forms a nano-cage that allows encapsulation of the non-native substrate proteins and provides a physical environment optimized to promote and accelerate protein folding. GroES binds to the apical surface of the GroEL ring, thereby capping the opening of the GroEL channel. In Vibrio parahaemolyticus serotype O3:K6 (strain RIMD 2210633), this protein is Co-chaperonin GroES 2.